A 556-amino-acid polypeptide reads, in one-letter code: GDP-Man:Man(3)GlcNAc(2)-PP-Dol alpha-1,2-mannosyltransferase (556 aa).

Over 1-7 (MANGLFT) the chain is Lumenal. A helical transmembrane segment spans residues 8–28 (YVAISLFTIGPLLALFIPFVW). Residues 29–184 (RLVGSSLGWY…RWVLASTWPY (156 aa)) lie on the Cytoplasmic side of the membrane. Over residues 64 to 79 (SKSAKGRKAEKEDRDT) the composition is skewed to basic and acidic residues. The tract at residues 64–86 (SKSAKGRKAEKEDRDTFNNTEAT) is disordered. The segment at residues 185–205 (FTLAGQSFGSLIMAWDAFSLL) is an intramembrane region (helical). The Cytoplasmic segment spans residues 206–454 (VPDIFVDTMG…VGVNGMWNEH (249 aa)). The helical intramembrane region spans 455-475 (FGIGVVEYQAAGLISVVHDSG). The Cytoplasmic portion of the chain corresponds to 476–556 (GPKLDIVVEV…KAVEKPKSRQ (81 aa)).

It belongs to the glycosyltransferase group 1 family. Glycosyltransferase 4 subfamily.

It localises to the endoplasmic reticulum membrane. It catalyses the reaction an alpha-D-Man-(1-&gt;3)-[alpha-D-Man-(1-&gt;6)]-beta-D-Man-(1-&gt;4)-beta-D-GlcNAc-(1-&gt;4)-alpha-D-GlcNAc-diphospho-di-trans,poly-cis-dolichol + 2 GDP-alpha-D-mannose = an alpha-D-Man-(1-&gt;2)-alpha-D-Man-(1-&gt;2)-alpha-D-Man-(1-&gt;3)-[alpha-D-Man-(1-&gt;6)]-beta-D-Man-(1-&gt;4)-beta-D-GlcNAc-(1-&gt;4)-alpha-D-GlcNAc-diphospho-di-trans,poly-cis-dolichol + 2 GDP + 2 H(+). It participates in protein modification; protein glycosylation. In terms of biological role, GDP-Man:Man(3)GlcNAc(2)-PP-Dol alpha-1,2-mannosyltransferase that operates in the biosynthetic pathway of dolichol-linked oligosaccharides, the glycan precursors employed in protein asparagine (N)-glycosylation. The assembly of dolichol-linked oligosaccharides begins on the cytosolic side of the endoplasmic reticulum membrane and finishes in its lumen. The sequential addition of sugars to dolichol pyrophosphate produces dolichol-linked oligosaccharides containing fourteen sugars, including two GlcNAcs, nine mannoses and three glucoses. Once assembled, the oligosaccharide is transferred from the lipid to nascent proteins by oligosaccharyltransferases. Catalyzes, on the cytoplasmic face of the endoplasmic reticulum, the addition of the fourth and fifth mannose residues to the dolichol-linked oligosaccharide chain, to produce Man(5)GlcNAc(2)-PP-dolichol core oligosaccharide. This chain is GDP-Man:Man(3)GlcNAc(2)-PP-Dol alpha-1,2-mannosyltransferase (alg-11), found in Neurospora crassa (strain ATCC 24698 / 74-OR23-1A / CBS 708.71 / DSM 1257 / FGSC 987).